We begin with the raw amino-acid sequence, 1193 residues long: Probable DNA-directed RNA polymerase II subunit RPB2 homolog (1193 aa).

Residue Asp-808 coordinates Mg(2+). Zn(2+) is bound by residues Cys-1137, Cys-1140, Cys-1155, and Cys-1158. The C4-type zinc finger occupies 1137–1158; it reads CVPCKSYFKVVKTQNGFFCSGC.

Belongs to the RNA polymerase beta chain family.

It catalyses the reaction RNA(n) + a ribonucleoside 5'-triphosphate = RNA(n+1) + diphosphate. Component of the DNA-dependent RNA polymerase that catalyzes the transcription of DNA into RNA using the four ribonucleoside triphosphates as substrates. Second largest component of RNA polymerase II which synthesizes mRNA precursors and many functional non-coding RNAs. Proposed to contribute to the polymerase catalytic activity and forms the polymerase active center together with the largest subunit. This is Probable DNA-directed RNA polymerase II subunit RPB2 homolog from Invertebrate iridescent virus 6 (IIV-6).